Consider the following 396-residue polypeptide: Actin-related protein 6 (396 aa).

The residue at position 2 (Thr2) is an N-acetylthreonine. Lys260 is modified (N6-acetyllysine).

It belongs to the actin family. ARP6 subfamily. Component of the chromatin-remodeling SRCAP complex composed of at least SRCAP, DMAP1, RUVBL1, RUVBL2, ACTL6A, YEATS4, ACTR6 and ZNHIT1. Interacts with CBX1, CBX3 and CBX5.

It is found in the cytoplasm. The protein localises to the cytoskeleton. Its subcellular location is the nucleus. It localises to the nucleolus. Its function is as follows. Required for formation and/or maintenance of proper nucleolar structure and function. Plays a dual role in the regulation of ribosomal DNA (rDNA) transcription. In the presence of high glucose, maintains active rDNA transcription through H2A.Z deposition and under glucose starvation, is required for the repression of rDNA transcription, and this function may be independent of H2A.Z. This is Actin-related protein 6 (ACTR6) from Homo sapiens (Human).